Here is a 103-residue protein sequence, read N- to C-terminus: Large ribosomal subunit protein bL21 (103 aa).

The protein belongs to the bacterial ribosomal protein bL21 family. Part of the 50S ribosomal subunit. Contacts protein L20.

Functionally, this protein binds to 23S rRNA in the presence of protein L20. The sequence is that of Large ribosomal subunit protein bL21 from Parvibaculum lavamentivorans (strain DS-1 / DSM 13023 / NCIMB 13966).